We begin with the raw amino-acid sequence, 230 residues long: ATP phosphoribosyltransferase (230 aa).

Belongs to the ATP phosphoribosyltransferase family. Short subfamily. In terms of assembly, heteromultimer composed of HisG and HisZ subunits.

The protein resides in the cytoplasm. The enzyme catalyses 1-(5-phospho-beta-D-ribosyl)-ATP + diphosphate = 5-phospho-alpha-D-ribose 1-diphosphate + ATP. The protein operates within amino-acid biosynthesis; L-histidine biosynthesis; L-histidine from 5-phospho-alpha-D-ribose 1-diphosphate: step 1/9. Catalyzes the condensation of ATP and 5-phosphoribose 1-diphosphate to form N'-(5'-phosphoribosyl)-ATP (PR-ATP). Has a crucial role in the pathway because the rate of histidine biosynthesis seems to be controlled primarily by regulation of HisG enzymatic activity. This is ATP phosphoribosyltransferase (hisG) from Chelativorans sp. (strain BNC1).